The following is a 229-amino-acid chain: Protein GrpE (229 aa).

2 disordered regions span residues methionine 1–serine 49 and aspartate 207–aspartate 229. The span at threonine 13–glutamate 24 shows a compositional bias: basic and acidic residues.

The protein belongs to the GrpE family. As to quaternary structure, homodimer.

It localises to the cytoplasm. Its function is as follows. Participates actively in the response to hyperosmotic and heat shock by preventing the aggregation of stress-denatured proteins, in association with DnaK and GrpE. It is the nucleotide exchange factor for DnaK and may function as a thermosensor. Unfolded proteins bind initially to DnaJ; upon interaction with the DnaJ-bound protein, DnaK hydrolyzes its bound ATP, resulting in the formation of a stable complex. GrpE releases ADP from DnaK; ATP binding to DnaK triggers the release of the substrate protein, thus completing the reaction cycle. Several rounds of ATP-dependent interactions between DnaJ, DnaK and GrpE are required for fully efficient folding. This is Protein GrpE from Mycobacterium leprae (strain TN).